We begin with the raw amino-acid sequence, 392 residues long: PMA1 stabilization in the Golgi protein 1 (392 aa).

A signal peptide spans 1–22 (MRFHDSILIFFSLASLYQHVHG). O-linked (Man) threonine glycosylation is found at T34 and T35. An O-linked (Man) serine glycan is attached at S36. Residue T45 is glycosylated (O-linked (Man) threonine). A glycan (O-linked (Man) serine) is linked at S49. 3 O-linked (Man) threonine glycosylation sites follow: T55, T57, and T63. O-linked (Man) serine glycosylation is present at S65. Residue T71 is glycosylated (O-linked (Man) threonine). The O-linked (Man) serine glycan is linked to S80. 2 O-linked (Man) threonine glycosylation sites follow: T89 and T99. S107 carries an O-linked (Man) serine glycan. 2 O-linked (Man) threonine glycosylation sites follow: T108 and T112. Residues S114 and S115 are each glycosylated (O-linked (Man) serine). T117 is a glycosylation site (O-linked (Man) threonine). O-linked (Man) serine glycans are attached at residues S119 and S148. An O-linked (Man) threonine glycan is attached at T156. The O-linked (Man) serine glycan is linked to S171. O-linked (Man) threonine glycosylation is present at T176. S181 carries O-linked (Man) serine glycosylation. O-linked (Man) threonine glycosylation is found at T188, T192, T195, and T199. Residues S203 and S215 are each glycosylated (O-linked (Man) serine). Topologically, residues 230 to 317 (DIPATFFSSE…DAGITNDQWY (88 aa)) are lumenal. The helical transmembrane segment at 318–338 (YVALSIPTVVVVFFVFMYFFL) threads the bilayer. The Cytoplasmic portion of the chain corresponds to 339–392 (YVNGKNRDFTDVTRKALNKKRRVLGKFSEMKKFKNMKNHKYTELPSYKKTSKQN).

As to quaternary structure, interacts with EXP1. PSG1-N' interacts with ERAD-related proteins involved in PMA1 quality control including EPS1, CDC48, UBX2 and SSM4. PSG1-C' interacts with the TLG1/2 SNARE complex proteins TLG1, TLG2 and VTI1. The precursor protein is cleaved into two polypeptide chains, PSG1-N' and PSG1-C'. The cleavage is performed in the Golgi apparatus by Ca(+)-dependent serine protease KEX2 between Arg-229 and Asp-230. Post-translationally, PSG1-N' is highly O-mannosylated.

Its subcellular location is the golgi apparatus lumen. It localises to the cytoplasmic vesicle. The protein resides in the COPI-coated vesicle membrane. Its function is as follows. With EXP1, the specific cargo receptor protein for the plasma membrane ATPase PMA1, is involved in the transport and/or maturation of PMA1. EXP1 and PSG1 probably act sequentially to promote PMA1 sorting between the ER and the Golgi, with EXP1 promoting PMA1 export from the ER to the Golgi while PSG1 has a role in PMA1 maturation or quality control in the Golgi. PSG1 might also couple PMA1 sorting and maturation in the early secretory pathway with the glycosylation machinery. Functionally, PSG1 is cleaved by KEX2 in two stable peptides, PSG1-N' and PSG1-C', the former supporting a role in maturation quality control, the latter having a role in modulating vesicular trafficking. In Saccharomyces cerevisiae (strain ATCC 204508 / S288c) (Baker's yeast), this protein is PMA1 stabilization in the Golgi protein 1.